Reading from the N-terminus, the 270-residue chain is uncharacterized protein (270 aa).

This is an uncharacterized protein from Aquifex aeolicus (strain VF5).